The chain runs to 199 residues: dITP/XTP pyrophosphatase (199 aa).

7–12 contributes to the substrate binding site; sequence SNNRGK. The Proton acceptor role is filled by Asp68. Asp68 contributes to the Mg(2+) binding site. Residues Ala69, 154-157, Lys177, and 182-183 contribute to the substrate site; these read FGFD and HR.

This sequence belongs to the HAM1 NTPase family. In terms of assembly, homodimer. The cofactor is Mg(2+).

The catalysed reaction is XTP + H2O = XMP + diphosphate + H(+). It catalyses the reaction dITP + H2O = dIMP + diphosphate + H(+). The enzyme catalyses ITP + H2O = IMP + diphosphate + H(+). Functionally, pyrophosphatase that catalyzes the hydrolysis of nucleoside triphosphates to their monophosphate derivatives, with a high preference for the non-canonical purine nucleotides XTP (xanthosine triphosphate), dITP (deoxyinosine triphosphate) and ITP. Seems to function as a house-cleaning enzyme that removes non-canonical purine nucleotides from the nucleotide pool, thus preventing their incorporation into DNA/RNA and avoiding chromosomal lesions. The protein is dITP/XTP pyrophosphatase of Albidiferax ferrireducens (strain ATCC BAA-621 / DSM 15236 / T118) (Rhodoferax ferrireducens).